The primary structure comprises 227 residues: Translation initiation factor 6 (227 aa).

Belongs to the eIF-6 family.

Its function is as follows. Binds to the 50S ribosomal subunit and prevents its association with the 30S ribosomal subunit to form the 70S initiation complex. The sequence is that of Translation initiation factor 6 from Methanococcus vannielii (strain ATCC 35089 / DSM 1224 / JCM 13029 / OCM 148 / SB).